The chain runs to 196 residues: Carnitine operon protein CaiE (196 aa).

The disordered stretch occupies residues 176–196 (LRQMEENRPRLQGTTDVAPKR).

Belongs to the transferase hexapeptide repeat family.

It functions in the pathway amine and polyamine metabolism; carnitine metabolism. Overproduction of CaiE stimulates the activity of CaiB and CaiD. This is Carnitine operon protein CaiE from Escherichia fergusonii (strain ATCC 35469 / DSM 13698 / CCUG 18766 / IAM 14443 / JCM 21226 / LMG 7866 / NBRC 102419 / NCTC 12128 / CDC 0568-73).